A 154-amino-acid chain; its full sequence is SsrA-binding protein (154 aa).

It belongs to the SmpB family.

The protein resides in the cytoplasm. Functionally, required for rescue of stalled ribosomes mediated by trans-translation. Binds to transfer-messenger RNA (tmRNA), required for stable association of tmRNA with ribosomes. tmRNA and SmpB together mimic tRNA shape, replacing the anticodon stem-loop with SmpB. tmRNA is encoded by the ssrA gene; the 2 termini fold to resemble tRNA(Ala) and it encodes a 'tag peptide', a short internal open reading frame. During trans-translation Ala-aminoacylated tmRNA acts like a tRNA, entering the A-site of stalled ribosomes, displacing the stalled mRNA. The ribosome then switches to translate the ORF on the tmRNA; the nascent peptide is terminated with the 'tag peptide' encoded by the tmRNA and targeted for degradation. The ribosome is freed to recommence translation, which seems to be the essential function of trans-translation. The protein is SsrA-binding protein of Treponema pallidum (strain Nichols).